The primary structure comprises 331 residues: Homeobox protein DBX1 (331 aa).

Disordered regions lie at residues Arg56–Asn94 and Lys232–Ser331. A DNA-binding region (homeobox) is located at residues Gly173–Lys232. Over residues Asp256–Gly266 the composition is skewed to basic and acidic residues. Over residues Pro299 to Phe314 the composition is skewed to low complexity. A compositionally biased stretch (acidic residues) spans Ser315–Ser331.

Belongs to the H2.0 homeobox family.

It localises to the nucleus. Its function is as follows. May function within the midpoint progenitor population to inhibit neuronal differentiation, possibly through modulating the function of Xash3. The polypeptide is Homeobox protein DBX1 (dbx1) (Xenopus laevis (African clawed frog)).